Reading from the N-terminus, the 350-residue chain is S-adenosylmethionine:tRNA ribosyltransferase-isomerase (350 aa).

It belongs to the QueA family. Monomer.

The protein resides in the cytoplasm. It catalyses the reaction 7-aminomethyl-7-carbaguanosine(34) in tRNA + S-adenosyl-L-methionine = epoxyqueuosine(34) in tRNA + adenine + L-methionine + 2 H(+). Its pathway is tRNA modification; tRNA-queuosine biosynthesis. In terms of biological role, transfers and isomerizes the ribose moiety from AdoMet to the 7-aminomethyl group of 7-deazaguanine (preQ1-tRNA) to give epoxyqueuosine (oQ-tRNA). This is S-adenosylmethionine:tRNA ribosyltransferase-isomerase from Vibrio parahaemolyticus serotype O3:K6 (strain RIMD 2210633).